The chain runs to 552 residues: Urocanate hydratase (552 aa).

NAD(+) is bound by residues 49–50 (GG), glutamine 127, 173–175 (GMG), aspartate 193, 239–240 (NA), 260–264 (QTSAH), 270–271 (YI), and tyrosine 319. Cysteine 407 is an active-site residue. An NAD(+)-binding site is contributed by glycine 489.

The protein belongs to the urocanase family. NAD(+) is required as a cofactor.

It localises to the cytoplasm. The catalysed reaction is 4-imidazolone-5-propanoate = trans-urocanate + H2O. It participates in amino-acid degradation; L-histidine degradation into L-glutamate; N-formimidoyl-L-glutamate from L-histidine: step 2/3. In terms of biological role, catalyzes the conversion of urocanate to 4-imidazolone-5-propionate. In Bacillus cereus (strain AH187), this protein is Urocanate hydratase.